The primary structure comprises 133 residues: Type III secretion protein HrcQb (133 aa).

Residues 1–21 are compositionally biased toward acidic residues; the sequence is MSTEDLYQDDVEMLDDYEEPV. Residues 1–60 form a disordered region; the sequence is MSTEDLYQDDVEMLDDYEEPVPEQADQQQRDDEYAEHAFGYADSDAEHEEQSGDHHESPM. Positions 49-59 are enriched in basic and acidic residues; sequence EEQSGDHHESP.

The protein belongs to the FliN/MopA/SpaO family. In terms of assembly, homotetramer. The four monomers assemble into two tightly bound homodimers. Interacts with HrcQa.

It is found in the cytoplasm. Component of the type III secretion system, which is required for effector protein delivery, parasitism, and pathogenicity. Probably participates in the formation of a C-ring-like assembly along with HrcQa. This Pseudomonas syringae pv. syringae protein is Type III secretion protein HrcQb (hrcQb).